Reading from the N-terminus, the 205-residue chain is Holliday junction branch migration complex subunit RuvA (205 aa).

The domain I stretch occupies residues 1–64; that stretch reads MIGHIQGVLT…EDAQLLYGFI (64 aa). A domain II region spans residues 65–143; that stretch reads SASERSLFRL…DWQPSTPFTD (79 aa). A disordered region spans residues 136 to 157; that stretch reads QPSTPFTDRAPLDSQGMDAREH. A flexible linker region spans residues 144-156; the sequence is RAPLDSQGMDARE. Residues 157–205 form a domain III region; it reads HPADARTDAISALQSLGYKENQAEKALQKVYSAEHNSETLIRLALKQLS.

This sequence belongs to the RuvA family. Homotetramer. Forms an RuvA(8)-RuvB(12)-Holliday junction (HJ) complex. HJ DNA is sandwiched between 2 RuvA tetramers; dsDNA enters through RuvA and exits via RuvB. An RuvB hexamer assembles on each DNA strand where it exits the tetramer. Each RuvB hexamer is contacted by two RuvA subunits (via domain III) on 2 adjacent RuvB subunits; this complex drives branch migration. In the full resolvosome a probable DNA-RuvA(4)-RuvB(12)-RuvC(2) complex forms which resolves the HJ.

It localises to the cytoplasm. Functionally, the RuvA-RuvB-RuvC complex processes Holliday junction (HJ) DNA during genetic recombination and DNA repair, while the RuvA-RuvB complex plays an important role in the rescue of blocked DNA replication forks via replication fork reversal (RFR). RuvA specifically binds to HJ cruciform DNA, conferring on it an open structure. The RuvB hexamer acts as an ATP-dependent pump, pulling dsDNA into and through the RuvAB complex. HJ branch migration allows RuvC to scan DNA until it finds its consensus sequence, where it cleaves and resolves the cruciform DNA. This chain is Holliday junction branch migration complex subunit RuvA, found in Idiomarina loihiensis (strain ATCC BAA-735 / DSM 15497 / L2-TR).